The primary structure comprises 592 residues: Aspartate--tRNA(Asp/Asn) ligase (592 aa).

Glutamate 175 provides a ligand contact to L-aspartate. Residues 199-202 are aspartate; that stretch reads QLFK. Arginine 221 contributes to the L-aspartate binding site. Residues 221–223 and glutamine 230 each bind ATP; that span reads RDE. Histidine 450 provides a ligand contact to L-aspartate. Position 483 (glutamate 483) interacts with ATP. Arginine 490 is an L-aspartate binding site. 535–538 serves as a coordination point for ATP; the sequence is GLDR.

The protein belongs to the class-II aminoacyl-tRNA synthetase family. Type 1 subfamily. In terms of assembly, homodimer.

It is found in the cytoplasm. The enzyme catalyses tRNA(Asx) + L-aspartate + ATP = L-aspartyl-tRNA(Asx) + AMP + diphosphate. Functionally, aspartyl-tRNA synthetase with relaxed tRNA specificity since it is able to aspartylate not only its cognate tRNA(Asp) but also tRNA(Asn). Reaction proceeds in two steps: L-aspartate is first activated by ATP to form Asp-AMP and then transferred to the acceptor end of tRNA(Asp/Asn). This Acinetobacter baumannii (strain AB307-0294) protein is Aspartate--tRNA(Asp/Asn) ligase.